Reading from the N-terminus, the 190-residue chain is Shikimate kinase (190 aa).

13 to 18 provides a ligand contact to ATP; sequence GAGKTT. Thr-17 contacts Mg(2+). Asp-35, Arg-59, and Gly-81 together coordinate substrate. Position 119 (Arg-119) interacts with ATP. Arg-138 provides a ligand contact to substrate.

It belongs to the shikimate kinase family. In terms of assembly, monomer. Mg(2+) is required as a cofactor.

The protein localises to the cytoplasm. The enzyme catalyses shikimate + ATP = 3-phosphoshikimate + ADP + H(+). It functions in the pathway metabolic intermediate biosynthesis; chorismate biosynthesis; chorismate from D-erythrose 4-phosphate and phosphoenolpyruvate: step 5/7. Its function is as follows. Catalyzes the specific phosphorylation of the 3-hydroxyl group of shikimic acid using ATP as a cosubstrate. This Ralstonia nicotianae (strain ATCC BAA-1114 / GMI1000) (Ralstonia solanacearum) protein is Shikimate kinase.